Consider the following 313-residue polypeptide: Dehydrogenase/reductase SDR family member 1 (313 aa).

Alanine 2 bears the N-acetylalanine mark. Isoleucine 19 contacts NAD(+). An Omega-N-methylarginine modification is found at arginine 21. Aspartate 64 serves as a coordination point for NAD(+). Serine 151 contributes to the substrate binding site. Positions 163, 167, and 198 each coordinate NAD(+). The active-site Proton acceptor is tyrosine 163. Residues 235–313 (CVVALATDPN…WIIALYTSKF (79 aa)) form a required for ER localization region.

It belongs to the short-chain dehydrogenases/reductases (SDR) family. Detected in heart, liver, adrenal glands, and at low levels in skeletal muscle, kidney, pancreas and brain.

It is found in the endoplasmic reticulum. The catalysed reaction is 17alpha-estradiol + NADP(+) = estrone + NADPH + H(+). The enzyme catalyses testosterone + NADP(+) = androst-4-ene-3,17-dione + NADPH + H(+). It catalyses the reaction prostaglandin E1 + NADPH + H(+) = prostaglandin F1 + NADP(+). It carries out the reaction isatin + NADPH + H(+) = 3-hydroxyindolin-2-one + NADP(+). Its function is as follows. NADPH-dependent oxidoreductase which catalyzes the reduction of steroids (estrone, androstene-3,17-dione and cortisone) as well as prostaglandin E1, isatin and xenobiotics in vitro. May have a role in steroid and/or xenobiotic metabolism. This is Dehydrogenase/reductase SDR family member 1 from Homo sapiens (Human).